We begin with the raw amino-acid sequence, 203 residues long: Nucleoside triphosphate pyrophosphatase (203 aa).

Asp-78 functions as the Proton acceptor in the catalytic mechanism.

Belongs to the Maf family. A divalent metal cation is required as a cofactor.

The protein localises to the cytoplasm. It carries out the reaction a ribonucleoside 5'-triphosphate + H2O = a ribonucleoside 5'-phosphate + diphosphate + H(+). The enzyme catalyses a 2'-deoxyribonucleoside 5'-triphosphate + H2O = a 2'-deoxyribonucleoside 5'-phosphate + diphosphate + H(+). Nucleoside triphosphate pyrophosphatase. May have a dual role in cell division arrest and in preventing the incorporation of modified nucleotides into cellular nucleic acids. The polypeptide is Nucleoside triphosphate pyrophosphatase (Prochlorococcus marinus (strain MIT 9301)).